A 183-amino-acid polypeptide reads, in one-letter code: Outer membrane protein H.8 (183 aa).

The signal sequence occupies residues Met1–Ala17. Cys18 carries the N-palmitoyl cysteine lipid modification. Cys18 carries S-diacylglycerol cysteine lipidation. Residues Ala27–Ala51 form a disordered region. A Plastocyanin-like domain is found at Gly57–Asp183. Cu cation is bound by residues His102, Cys166, His171, and Met175.

Requires Cu cation as cofactor.

The protein localises to the cell outer membrane. This Neisseria gonorrhoeae protein is Outer membrane protein H.8.